A 130-amino-acid chain; its full sequence is Small ribosomal subunit protein uS9 (130 aa).

Residues 108–130 (PRMKERRKYGLKKARRAPQFSKR) form a disordered region. A compositionally biased stretch (basic residues) spans 111–130 (KERRKYGLKKARRAPQFSKR).

Belongs to the universal ribosomal protein uS9 family.

This Desulforamulus reducens (strain ATCC BAA-1160 / DSM 100696 / MI-1) (Desulfotomaculum reducens) protein is Small ribosomal subunit protein uS9.